The following is a 122-amino-acid chain: Small ribosomal subunit protein uS13 (122 aa).

The disordered stretch occupies residues 94–122; that stretch reads GLPVRGQVTQKNARTRKGPRKTVAGKKGK. Over residues 106-122 the composition is skewed to basic residues; that stretch reads ARTRKGPRKTVAGKKGK.

The protein belongs to the universal ribosomal protein uS13 family. In terms of assembly, part of the 30S ribosomal subunit. Forms a loose heterodimer with protein S19. Forms two bridges to the 50S subunit in the 70S ribosome.

Located at the top of the head of the 30S subunit, it contacts several helices of the 16S rRNA. In the 70S ribosome it contacts the 23S rRNA (bridge B1a) and protein L5 of the 50S subunit (bridge B1b), connecting the 2 subunits; these bridges are implicated in subunit movement. Contacts the tRNAs in the A and P-sites. The sequence is that of Small ribosomal subunit protein uS13 from Mycoplasma mobile (strain ATCC 43663 / 163K / NCTC 11711) (Mesomycoplasma mobile).